Reading from the N-terminus, the 100-residue chain is ADAPPPAFNQCKACHSIDAGKNGVGPSLSGAYGRKVGLAPNYKYSPAHLASGMTIDDAMLTKYLANPKETIPGNKMGAAFGGLKNPADVAAVIAYLKTVK.

The heme c site is built by C11, C14, H15, and M76.

This sequence belongs to the cytochrome c family. In terms of processing, binds 1 heme c group covalently per subunit.

Functionally, cytochrome c2 is found mainly in purple, non-sulfur, photosynthetic bacteria where it functions as the electron donor to the oxidized bacteriochlorophyll in the photophosphorylation pathway. However, it may also have a role in the respiratory chain and is found in some non-photosynthetic bacteria. In Magnetospirillum molischianum (Rhodospirillum molischianum), this protein is Cytochrome c2 iso-1.